The chain runs to 263 residues: Lens fiber major intrinsic protein (263 aa).

Over 1-9 the chain is Cytoplasmic; sequence MWELRSASF. Residues 10 to 29 form a helical membrane-spanning segment; it reads WRAICAEFFASLFYVFFGLG. Over 30-41 the chain is Extracellular; the sequence is ASLRWAPGPLHV. The helical transmembrane segment at 42–59 threads the bilayer; that stretch reads LQVALAFGLALATLVQAV. At 60-61 the chain is on the cytoplasmic side; that stretch reads GH. The discontinuously helical intramembrane region spans 62 to 77; it reads ISGAHVNPAVTFAFLV. The NPA 1 motif lies at 68–70; it reads NPA. The Cytoplasmic segment spans residues 78–82; it reads GSQMS. A helical transmembrane segment spans residues 83-106; sequence LLRAICYMVAQLLGAVAGAAVLYS. The Extracellular segment spans residues 107 to 127; sequence VTPPAVRGNLALNTLHPGVSV. A helical transmembrane segment spans residues 128 to 148; sequence GQATIVEIFLTLQFVLCIFAT. Residues 149–156 are Cytoplasmic-facing; that stretch reads YDERRNGR. Residues 157-175 form a helical membrane-spanning segment; it reads LGSVALAVGFSLTLGHLFG. Topologically, residues 176 to 178 are extracellular; sequence MYY. The segment at residues 179–193 is an intramembrane region (discontinuously helical); that stretch reads TGAGMNPARSFAPAI. Residues 184 to 186 carry the NPA 2 motif; sequence NPA. The Extracellular segment spans residues 194 to 200; the sequence is LTRNFTN. Residues 201-222 traverse the membrane as a helical segment; the sequence is HWVYWVGPVIGAGLGSLLYDFL. Residues 223 to 263 are Cytoplasmic-facing; sequence LFPRLKSVSERLSILKGSRPSESNGQPEVTGEPVELKTQAL. An interaction with CALM region spans residues 227–237; the sequence is LKSVSERLSIL. A Phosphoserine modification is found at Ser-235. Residues 239-263 form a disordered region; that stretch reads GSRPSESNGQPEVTGEPVELKTQAL. Ser-243 bears the Phosphoserine; by PKA mark. Position 245 is a phosphoserine (Ser-245). At Asn-246 the chain carries Deamidated asparagine.

This sequence belongs to the MIP/aquaporin (TC 1.A.8) family. Homotetramer; each monomer provides an independent water pore. Two homotetramers on opposing membranes can dimerize, forming a cell-cell junction. Interacts with CALM; the calcium-calmodulin/CALM complex interacts with the cytoplasmic domains of two aquaporins, leading to channel closure. Interacts with BFSP1 (via C-terminus); prevents calcium-dependent inhibition of the water channel activity. In terms of processing, fatty acylated at Met-1 and Lys-238. The acyl modifications, in decreasing order of ion abundance, are: oleoyl (C18:1) &gt; palmitoyl (C16:0) &gt; stearoyl (C18:0) &gt; eicosenoyl (C20:1) &gt; dihomo-gamma-linolenoyl (C20:3) &gt; palmitoleoyl (C16:1) &gt; eicosadienoyl (C20:2). Post-translationally, subject to partial proteolytic cleavage in the eye lens core. Partial proteolysis promotes interactions between tetramers from adjoining membranes. In terms of tissue distribution, major component of lens fiber junctions.

The protein localises to the cell membrane. Its subcellular location is the cell junction. It catalyses the reaction H2O(in) = H2O(out). The water channel activity is inhibited by calcium through calmodulin/CALM. Aquaporins form homotetrameric transmembrane channels, with each monomer independently mediating water transport across the plasma membrane along its osmotic gradient. Specifically expressed in lens fiber cells, this aquaporin is crucial for maintaining lens water homeostasis and transparency. Beyond water permeability, it also acts as a cell-to-cell adhesion molecule, forming thin junctions between lens fiber cells that are essential for maintaining the ordered structure and transparency of the lens. This is Lens fiber major intrinsic protein from Bos taurus (Bovine).